Consider the following 220-residue polypeptide: Deoxyribose-phosphate aldolase (220 aa).

The active-site Proton donor/acceptor is Asp-89. The active-site Schiff-base intermediate with acetaldehyde is Lys-151. Residue Lys-180 is the Proton donor/acceptor of the active site.

It belongs to the DeoC/FbaB aldolase family. DeoC type 1 subfamily.

The protein localises to the cytoplasm. The enzyme catalyses 2-deoxy-D-ribose 5-phosphate = D-glyceraldehyde 3-phosphate + acetaldehyde. It participates in carbohydrate degradation; 2-deoxy-D-ribose 1-phosphate degradation; D-glyceraldehyde 3-phosphate and acetaldehyde from 2-deoxy-alpha-D-ribose 1-phosphate: step 2/2. Its function is as follows. Catalyzes a reversible aldol reaction between acetaldehyde and D-glyceraldehyde 3-phosphate to generate 2-deoxy-D-ribose 5-phosphate. The polypeptide is Deoxyribose-phosphate aldolase (Streptococcus pneumoniae (strain Hungary19A-6)).